Consider the following 591-residue polypeptide: MTIAITDVVLRDAHQSLFATRLRLDDMLPIAAALDDVGYGSLECWGGATFDACIRFLGEDPWLRLRELKKAMPKTPLQMLLRGQNLLGYRHYADDVVERFVERAVKNGMDVFRVFDAMNDPRNMKAALQAVRSHGAHAQGTLSYTTSPAHTLQTWLDLTEQLLETGVDSIAIKDMSGILTPMAAYELVSEIKKRFEVRLHLHCHATTGMAEMALLKAIEAGVDGVDTAISSMSATYGHPATEALVATLAGTEHDTGLDILKLENIAAYFREVRKKYHAFEGQLKGYDSRILVAQVPGGMLTNLESQLKQQNAADKLDQVLAEIPRVREDLGFIPLVTPTSQIVGTQAVLNVLTGERYKTIAKETAGILKGEYGHTPVPVNAALQARVLEGGAPVTCRPADLLKPELAELEADVRRQAQEKGITLAGNAIDDVLTVALFPQIGLKFLENRNNPAAFEPLPQAEAAQPVAKAEKPAASGIYTVEVEGKAFVVKVSDGGDISQLTAAVPAASSAPVQAAAPAGAGTPVTAPLAGNIWKVIATEGQTVAEGDVLLILEAMKMETEIRAAQAGTVRGIAVKSGDAVSVGDTLMTLA.

The 261-residue stretch at 3 to 263 folds into the Pyruvate carboxyltransferase domain; sequence IAITDVVLRD…DTGLDILKLE (261 aa). In terms of domain architecture, Biotinyl-binding spans 518 to 591; it reads PAGAGTPVTA…SVGDTLMTLA (74 aa). Lys-557 is modified (N6-biotinyllysine).

As to quaternary structure, composed of three chains (alpha, beta, and gamma). Requires biotin as cofactor.

It catalyses the reaction oxaloacetate + 2 Na(+)(in) + H(+) = pyruvate + 2 Na(+)(out) + CO2. Functionally, catalyzes the decarboxylation of oxaloacetate coupled to Na(+) translocation. The polypeptide is Oxaloacetate decarboxylase alpha chain (oadA1) (Salmonella typhimurium (strain LT2 / SGSC1412 / ATCC 700720)).